The chain runs to 166 residues: Regulatory protein RecX (166 aa).

It belongs to the RecX family.

It is found in the cytoplasm. Its function is as follows. Modulates RecA activity. This chain is Regulatory protein RecX, found in Klebsiella pneumoniae subsp. pneumoniae (strain ATCC 700721 / MGH 78578).